The primary structure comprises 626 residues: Colicin-Ib (626 aa).

Polar residues predominate over residues 276-286 (QQLTQQKNTPD). The tract at residues 276-308 (QQLTQQKNTPDGKTIVSPEKFPGRSSTNHSIVV) is disordered. Residues 588–612 (FSVMLGTPVGILGFAIIMAAVSALV) traverse the membrane as a helical segment.

This sequence belongs to the channel forming colicin family.

It localises to the host membrane. In terms of biological role, this colicin is a channel-forming colicin. This class of transmembrane toxins depolarize the cytoplasmic membrane, leading to dissipation of cellular energy. Functionally, colicins are polypeptide toxins produced by and active against E.coli and closely related bacteria. In Escherichia coli, this protein is Colicin-Ib (cib).